A 185-amino-acid polypeptide reads, in one-letter code: Recombination protein RecR (185 aa).

Residues 44–59 (CSVCFHLSSEPVCEIC) form a C4-type zinc finger. Residues 67 to 161 (NTICVVADSR…KVTRIAFGLP (95 aa)) form the Toprim domain.

It belongs to the RecR family.

May play a role in DNA repair. It seems to be involved in an RecBC-independent recombinational process of DNA repair. It may act with RecF and RecO. The protein is Recombination protein RecR of Trichormus variabilis (strain ATCC 29413 / PCC 7937) (Anabaena variabilis).